We begin with the raw amino-acid sequence, 335 residues long: Ig gamma-2A chain C region secreted form (335 aa).

Ig-like domains are found at residues 6-98 (PSVY…KKIE), 126-225 (PSVF…KTIS), and 234-330 (PQVY…KTIS). Asn-185 is a glycosylation site (N-linked (GlcNAc...) asparagine).

The protein localises to the secreted. The sequence is that of Ig gamma-2A chain C region secreted form from Mus musculus (Mouse).